Consider the following 301-residue polypeptide: Protoheme IX farnesyltransferase (301 aa).

9 helical membrane-spanning segments follow: residues 29–49 (VVAL…PGAV), 51–71 (LQPL…AAAF), 101–121 (AFSF…WWVN), 123–143 (LTAW…TAYL), 150–170 (NIVI…TAVT), 177–197 (ALLL…ALAI), 223–243 (CILL…LVGM), 244–264 (SGPV…YKAW), and 281–301 (FSIY…YLWG).

Belongs to the UbiA prenyltransferase family. Protoheme IX farnesyltransferase subfamily.

The protein localises to the cell inner membrane. It carries out the reaction heme b + (2E,6E)-farnesyl diphosphate + H2O = Fe(II)-heme o + diphosphate. Its pathway is porphyrin-containing compound metabolism; heme O biosynthesis; heme O from protoheme: step 1/1. In terms of biological role, converts heme B (protoheme IX) to heme O by substitution of the vinyl group on carbon 2 of heme B porphyrin ring with a hydroxyethyl farnesyl side group. The polypeptide is Protoheme IX farnesyltransferase (Shewanella denitrificans (strain OS217 / ATCC BAA-1090 / DSM 15013)).